A 366-amino-acid chain; its full sequence is Ribosomal RNA large subunit methyltransferase M (366 aa).

Residues serine 188, cysteine 221–glycine 224, aspartate 240, aspartate 260, and aspartate 277 contribute to the S-adenosyl-L-methionine site. Lysine 306 (proton acceptor) is an active-site residue.

This sequence belongs to the class I-like SAM-binding methyltransferase superfamily. RNA methyltransferase RlmE family. RlmM subfamily. As to quaternary structure, monomer.

It localises to the cytoplasm. It catalyses the reaction cytidine(2498) in 23S rRNA + S-adenosyl-L-methionine = 2'-O-methylcytidine(2498) in 23S rRNA + S-adenosyl-L-homocysteine + H(+). Functionally, catalyzes the 2'-O-methylation at nucleotide C2498 in 23S rRNA. The chain is Ribosomal RNA large subunit methyltransferase M from Escherichia coli O45:K1 (strain S88 / ExPEC).